The sequence spans 490 residues: Probable alcohol acetyltransferase FCK4 (490 aa).

It belongs to the alcohol acetyltransferase FCK4 family.

It participates in secondary metabolite biosynthesis. Functionally, probable alcohol acetyltransferase; part of the gene cluster that mediates the biosynthesis of cytokinins such as fusatin, fusatinic acids or 8-oxofusatin, known for their growth promoting and anti-senescence activities toward host plants. FCK1 is a bifunctional enzyme that performs the first steps in the biosynthesis of Fusarium cytokinins. It first condenses adenosine monophosphate (AMP) with dimethylallyl diphosphate (DMAPP) to yield isoprenyl adenosine monophosphate. It then catalyzes the removal of the phosphoribose to produce isopentenylaldehyde. The cytochrome P450 monooxygenase then converts isopentenylaldehyde to trans-zeatin. A condensation step converts trans-zeatin to fusatin which is further modified to produce fusatinic acid. The mechanism for oxidation of fusatin to fusatinic acid remains unknown. 8-oxofusatin could be produced through several pathways, via direct oxygenation of fusatin, or via the 8-oxo-pentenyladenine intermediate which itself must arise from either the prenylation of 8-oxo-AMP by FCK1 and/or oxygenation of isopentenylaldehyde. Both the FCK3 and FCK4 enzymes act downstream of the identified cytokinins to produce yet unidentified compounds. The sequence is that of Probable alcohol acetyltransferase FCK4 from Fusarium pseudograminearum (strain CS3096) (Wheat and barley crown-rot fungus).